We begin with the raw amino-acid sequence, 551 residues long: Palmdelphin (551 aa).

M1 is subject to N-acetylmethionine. Positions 12 to 106 form a coiled coil; sequence QAITDKRKIQ…LQISTKEEAI (95 aa). Residue K125 forms a Glycyl lysine isopeptide (Lys-Gly) (interchain with G-Cter in SUMO2) linkage. S135 bears the Phosphoserine mark. Residue K179 forms a Glycyl lysine isopeptide (Lys-Gly) (interchain with G-Cter in SUMO1); alternate linkage. K179 is covalently cross-linked (Glycyl lysine isopeptide (Lys-Gly) (interchain with G-Cter in SUMO2); alternate). Basic and acidic residues predominate over residues 248-259; it reads ERNSKSPTEYHE. The tract at residues 248 to 280 is disordered; it reads ERNSKSPTEYHEPVYANPFYRPTTPQRETVTPG. The segment covering 270–280 has biased composition (polar residues); that stretch reads TTPQRETVTPG. T271 is subject to Phosphothreonine. Phosphoserine is present on residues S321, S370, S384, and S385. Disordered stretches follow at residues 342 to 392 and 449 to 535; these read TPQK…QEDE and DEEE…EDPS. Positions 484–495 are enriched in basic and acidic residues; it reads KRSEASPHENTN. Residues S498, S515, and S520 each carry the phosphoserine modification.

The protein belongs to the paralemmin family. As to quaternary structure, interacts with GLUL. In terms of processing, phosphorylated. As to expression, ubiquitous. Most abundant in cardiac and skeletal muscle.

It is found in the cytoplasm. The protein resides in the cell projection. The protein localises to the dendrite. Its subcellular location is the dendritic spine. The protein is Palmdelphin (PALMD) of Homo sapiens (Human).